Consider the following 964-residue polypeptide: Translation initiation factor IF-2 (964 aa).

The disordered stretch occupies residues 26-375 (AAGVSKRSPE…QNNQHAFQAP (350 aa)). Composition is skewed to basic and acidic residues over residues 49–60 (YLKRSHGAREDS), 91–103 (VRPD…EAPK), 118–154 (AKPE…KPEP), 174–206 (IAAR…ERRQ), 225–236 (PQREERRDDRRG), 243–252 (RGPRGNDNRG), and 328–339 (KGGERSWDDNKK). A tr-type G domain is found at 464–633 (PRSPVVTVMG…LLQAEVLELK (170 aa)). The segment at 473–480 (GHVDHGKT) is G1. Residue 473–480 (GHVDHGKT) participates in GTP binding. Positions 498–502 (GITQH) are G2. Positions 519–522 (DTPG) are G3. GTP-binding positions include 519 to 523 (DTPGH) and 573 to 576 (NKID). The tract at residues 573–576 (NKID) is G4. The segment at 609-611 (SAK) is G5.

Belongs to the TRAFAC class translation factor GTPase superfamily. Classic translation factor GTPase family. IF-2 subfamily.

It is found in the cytoplasm. Its function is as follows. One of the essential components for the initiation of protein synthesis. Protects formylmethionyl-tRNA from spontaneous hydrolysis and promotes its binding to the 30S ribosomal subunits. Also involved in the hydrolysis of GTP during the formation of the 70S ribosomal complex. This is Translation initiation factor IF-2 from Chromobacterium violaceum (strain ATCC 12472 / DSM 30191 / JCM 1249 / CCUG 213 / NBRC 12614 / NCIMB 9131 / NCTC 9757 / MK).